The following is a 435-amino-acid chain: Glutamate-1-semialdehyde 2,1-aminomutase (435 aa).

Residue Lys-270 is modified to N6-(pyridoxal phosphate)lysine.

This sequence belongs to the class-III pyridoxal-phosphate-dependent aminotransferase family. HemL subfamily. Homodimer. Pyridoxal 5'-phosphate is required as a cofactor.

It is found in the cytoplasm. The catalysed reaction is (S)-4-amino-5-oxopentanoate = 5-aminolevulinate. It participates in porphyrin-containing compound metabolism; protoporphyrin-IX biosynthesis; 5-aminolevulinate from L-glutamyl-tRNA(Glu): step 2/2. This is Glutamate-1-semialdehyde 2,1-aminomutase from Wigglesworthia glossinidia brevipalpis.